The chain runs to 354 residues: Guanine nucleotide-binding protein G(o) subunit alpha (354 aa).

A lipid anchor (N-myristoyl glycine) is attached at G2. C3 carries the S-palmitoyl cysteine lipid modification. One can recognise a G-alpha domain in the interval 32–354; it reads KDIKLLLLGA…ANNLRGCGLY (323 aa). Residues 35 to 48 form a G1 motif region; sequence KLLLLGAGESGKST. Residues 40 to 47, 176 to 182, 201 to 205, 270 to 273, and A326 each bind GTP; these read GAGESGKS, LRTRVKT, DVGGQ, and NKKD. Mg(2+) contacts are provided by S47 and T182. The tract at residues 174–182 is G2 motif; the sequence is DILRTRVKT. Residues 197–206 form a G3 motif region; it reads FKLFDVGGQR. Residues 266–273 form a G4 motif region; sequence ILFLNKKD. Residues 324–329 form a G5 motif region; it reads TCATDT.

It belongs to the G-alpha family. G(i/o/t/z) subfamily. In terms of assembly, g proteins are composed of 3 units; alpha, beta and gamma. The alpha chain contains the guanine nucleotide binding site.

Guanine nucleotide-binding proteins (G proteins) are involved as modulators or transducers in various transmembrane signaling systems. The G(o) protein function is not clear. The protein is Guanine nucleotide-binding protein G(o) subunit alpha of Planorbella trivolvis (Marsh rams-horn).